The primary structure comprises 236 residues: MHTTQKDTTYTKIFVGGLPYHTTDASLRKYFEVFGDIEEAVVITDRQTGKSRGYGFVTMADRAAAERACKDPNPIIDGRKANVNLAYLGAKPRIMQPGFAFGVQQLHPALIQRPFGIPAHYVYPQAFVQPGVVIPHVQPTAAAASTTPYIDYTGAAYAQYSAAAAAAAAAAAYDQYPYAASPAAAGYVTTGGYSYAVQQPITAAAPGTAAAAAAAAAAAAAFGQYQPQQLQTDRMQ.

The RRM domain maps to 11 to 88 (TKIFVGGLPY…RKANVNLAYL (78 aa)). Positions 175–199 (QYPYAASPAAAGYVTTGGYSYAVQQ) are necessary for interaction with EIF4E.

Interacts with EIF4E; this interaction prevents EIF4E from binding to p53/TP53 mRNA and inhibits the assembly of translation initiation complex. Expressed strongly in heart and skeletal muscles. Weakly expressed in intestine, aorta, liver, lung, kidney, uterus and bladder.

It localises to the nucleus. It is found in the cytoplasm. Its function is as follows. Multifunctional RNA-binding protein involved in the regulation of pre-mRNA splicing, mRNA stability and mRNA translation important for cell fate decision and differentiation. Plays a major role in pre-mRNA alternative splicing regulation. Mediates preferentially muscle-specific exon inclusion in numerous mRNAs important for striated cardiac and skeletal muscle cell differentiation. Binds to intronic splicing enhancer (ISE) composed of stretches of GU-rich motifs localized in flanking intron of exon that will be included by alternative splicing. Involved in embryonic stem cell (ESC) transition to cardiac cell differentiation by promoting pre-mRNA alternative splicing events of several pluripotency and/or differentiation genes. Plays a role in the regulation of mRNA stability. Binds to 3'-untranslated region (UTR) AU-rich elements in target transcripts, such as CDKN1A and MYOG, leading to maintain their stabilities. Involved in myogenic differentiation by regulating MYOG levels. Binds to multiple regions in the mRNA 3'-UTR of TP63, hence inducing its destabilization. Also promotes the destabilization of the CHRM2 mRNA via its binding to a region in the coding sequence. Plays a role in the regulation of mRNA translation. Mediates repression of p53/TP53 mRNA translation through its binding to U-rich element in the 3'-UTR, hence preventing EIF4E from binding to p53/TP53 mRNA and translation initiation. Binds to a huge amount of mRNAs. Required for embryonic heart development, sarcomer and M-band formation in striated muscles. Together with RBM20, promotes the expression of short isoforms of PDLIM5/ENH in cardiomyocytes. This is RNA-binding protein 24 from Mus musculus (Mouse).